The primary structure comprises 196 residues: MQEPHNQEPIEEQKLSEMEDTLEKQHSGASTENTERAEEGVVIPDLEQQLKEAEIRAAEHHDAWLRAKAETENIRKRAQTDIANAHKYAIDNFATQLLAVMDSLDAALAVENSTIESLKDGVELTRKQLAAVFEKFNIHTINPQGEKFDPHQHEAMCTVESDIPPNTVTQVMQKGYVLHERVIRPAMVAVSKAKST.

Basic and acidic residues predominate over residues 1–26; sequence MQEPHNQEPIEEQKLSEMEDTLEKQH. A disordered region spans residues 1 to 40; the sequence is MQEPHNQEPIEEQKLSEMEDTLEKQHSGASTENTERAEEG.

This sequence belongs to the GrpE family. As to quaternary structure, homodimer.

It is found in the cytoplasm. Its function is as follows. Participates actively in the response to hyperosmotic and heat shock by preventing the aggregation of stress-denatured proteins, in association with DnaK and GrpE. It is the nucleotide exchange factor for DnaK and may function as a thermosensor. Unfolded proteins bind initially to DnaJ; upon interaction with the DnaJ-bound protein, DnaK hydrolyzes its bound ATP, resulting in the formation of a stable complex. GrpE releases ADP from DnaK; ATP binding to DnaK triggers the release of the substrate protein, thus completing the reaction cycle. Several rounds of ATP-dependent interactions between DnaJ, DnaK and GrpE are required for fully efficient folding. This chain is Protein GrpE, found in Nitrosomonas eutropha (strain DSM 101675 / C91 / Nm57).